Here is a 154-residue protein sequence, read N- to C-terminus: Large ribosomal subunit protein uL13 (154 aa).

The interval 129–154 (SQHPHEAQQPEALDVGTLNRKNKRIA) is disordered.

This sequence belongs to the universal ribosomal protein uL13 family. As to quaternary structure, part of the 50S ribosomal subunit.

Functionally, this protein is one of the early assembly proteins of the 50S ribosomal subunit, although it is not seen to bind rRNA by itself. It is important during the early stages of 50S assembly. In Bartonella bacilliformis (strain ATCC 35685 / KC583 / Herrer 020/F12,63), this protein is Large ribosomal subunit protein uL13.